We begin with the raw amino-acid sequence, 406 residues long: Cyclin-dependent kinase 4 homolog (406 aa).

Positions 102–388 (TFLFQALGKG…ARGALSHPFL (287 aa)) constitute a Protein kinase domain. Residues 108–116 (LGKGAYGNV) and Lys131 contribute to the ATP site. The active-site Proton acceptor is the Asp233. Residues Asn238 and Asp251 each coordinate Mg(2+).

The protein belongs to the protein kinase superfamily. CMGC Ser/Thr protein kinase family. CDC2/CDKX subfamily. As to quaternary structure, interacts with cyd-1; the interaction is likely involved in regulating cdk-4 activity. The cofactor is Mg(2+).

The enzyme catalyses L-seryl-[protein] + ATP = O-phospho-L-seryl-[protein] + ADP + H(+). It carries out the reaction L-threonyl-[protein] + ATP = O-phospho-L-threonyl-[protein] + ADP + H(+). Serine/threonine-protein kinase which, in association with cyclin D-like protein cyd-1, is required for the progression through the G1 phase of the cell cycle during postembryonic development by phosphorylating and inhibiting lin-35 and fzr-1. In complex with cyd-1, involved in sex determination during gonadogenesis by regulating the asymmetric division of the somatic gonadal precursor cell (SGP). The polypeptide is Cyclin-dependent kinase 4 homolog (Caenorhabditis elegans).